Consider the following 31-residue polypeptide: Bacteriocin leucocin-B (31 aa).

The protein resides in the secreted. In terms of biological role, inhibits a wide spectrum of lactic acid bacteria. The chain is Bacteriocin leucocin-B from Leuconostoc mesenteroides.